The primary structure comprises 254 residues: Major prion protein (254 aa).

Residues 1–22 form the signal peptide; sequence MANLSYWLLALFVATWTDVGLC. The interaction with GRB2, ERI3 and SYN1 stretch occupies residues 23 to 231; it reads KKRPKPGGWN…SQAYYDGRRS (209 aa). The disordered stretch occupies residues 25–104; that stretch reads RPKPGGWNTG…THNQWNKPSK (80 aa). A run of 5 repeats spans residues 51 to 59, 60 to 67, 68 to 75, 76 to 83, and 84 to 91. Residues 51–91 form a 5 X 8 AA tandem repeats of P-H-G-G-G-W-G-Q region; the sequence is PQGGGTWGQPHGGGWGQPHGGGWGQPHGGGWGQPHGGGWGQ. Residues 52 to 95 show a composition bias toward gly residues; that stretch reads QGGGTWGQPHGGGWGQPHGGGWGQPHGGGWGQPHGGGWGQGGGT. Cu(2+) is bound by residues His61, Gly62, Gly63, His69, Gly70, Gly71, His77, Gly78, Gly79, His85, Gly86, and Gly87. A prP27-30 (protease resistant core) region spans residues 90-231; the sequence is GQGGGTHNQW…SQAYYDGRRS (142 aa). A disulfide bridge links Cys179 with Cys214. Residues Asn181 and Asn197 are each glycosylated (N-linked (GlcNAc...) asparagine). Ser231 carries the GPI-anchor amidated serine lipid modification. Positions 232-254 are cleaved as a propeptide — removed in mature form; that stretch reads SAVLFSSPPVILLISFLIFLIVG.

It belongs to the prion family. Monomer and homodimer. Has a tendency to aggregate into amyloid fibrils containing a cross-beta spine, formed by a steric zipper of superposed beta-strands. Soluble oligomers may represent an intermediate stage on the path to fibril formation. Copper binding may promote oligomerization. Interacts with GRB2, APP, ERI3/PRNPIP and SYN1. Mislocalized cytosolically exposed PrP interacts with MGRN1; this interaction alters MGRN1 subcellular location and causes lysosomal enlargement. Interacts with KIAA1191.

It localises to the cell membrane. The protein resides in the golgi apparatus. Functionally, its primary physiological function is unclear. Has cytoprotective activity against internal or environmental stresses. May play a role in neuronal development and synaptic plasticity. May be required for neuronal myelin sheath maintenance. May play a role in iron uptake and iron homeostasis. Soluble oligomers are toxic to cultured neuroblastoma cells and induce apoptosis (in vitro). Association with GPC1 (via its heparan sulfate chains) targets PRNP to lipid rafts. Also provides Cu(2+) or Zn(2+) for the ascorbate-mediated GPC1 deaminase degradation of its heparan sulfate side chains. This is Major prion protein (PRNP) from Cricetulus griseus (Chinese hamster).